Consider the following 209-residue polypeptide: uncharacterized protein (209 aa).

Over residues 1–15 (MHRIDTKTAQKDKFG) the composition is skewed to basic and acidic residues. The segment at 1–34 (MHRIDTKTAQKDKFGAGKNGFTRGNPQTGTPATD) is disordered. Positions 22-31 (TRGNPQTGTP) are enriched in polar residues.

It to E.coli YfdL and M.jannaschii MJ0347.

This is an uncharacterized protein from Escherichia coli (strain K12).